The chain runs to 151 residues: MTKIYIDGDACPVKDEVFKVAGRYGLAVTVVGNAWLRLPQDPMITMIVVPEGPDAADDRIAELIEPGDICITNDIPLGSRCLIKRALVLRPNGKPMTENSIGDALATRDLMNTLREIGTMTGGPPPFAKADRSRFLSALDTMVHQAKRVVP.

This sequence belongs to the UPF0178 family.

The sequence is that of UPF0178 protein amb2838 from Paramagnetospirillum magneticum (strain ATCC 700264 / AMB-1) (Magnetospirillum magneticum).